The chain runs to 188 residues: UPF0398 protein ABC2016 (188 aa).

It belongs to the UPF0398 family.

The chain is UPF0398 protein ABC2016 from Shouchella clausii (strain KSM-K16) (Alkalihalobacillus clausii).